The sequence spans 567 residues: Proline--tRNA ligase (567 aa).

It belongs to the class-II aminoacyl-tRNA synthetase family. ProS type 1 subfamily. In terms of assembly, homodimer.

It is found in the cytoplasm. It catalyses the reaction tRNA(Pro) + L-proline + ATP = L-prolyl-tRNA(Pro) + AMP + diphosphate. Catalyzes the attachment of proline to tRNA(Pro) in a two-step reaction: proline is first activated by ATP to form Pro-AMP and then transferred to the acceptor end of tRNA(Pro). As ProRS can inadvertently accommodate and process non-cognate amino acids such as alanine and cysteine, to avoid such errors it has two additional distinct editing activities against alanine. One activity is designated as 'pretransfer' editing and involves the tRNA(Pro)-independent hydrolysis of activated Ala-AMP. The other activity is designated 'posttransfer' editing and involves deacylation of mischarged Ala-tRNA(Pro). The misacylated Cys-tRNA(Pro) is not edited by ProRS. In Campylobacter fetus subsp. fetus (strain 82-40), this protein is Proline--tRNA ligase.